We begin with the raw amino-acid sequence, 1373 residues long: DNA-directed RNA polymerase subunit beta (1373 aa).

The protein belongs to the RNA polymerase beta chain family. The RNAP catalytic core consists of 2 alpha, 1 beta, 1 beta' and 1 omega subunit. When a sigma factor is associated with the core the holoenzyme is formed, which can initiate transcription.

The enzyme catalyses RNA(n) + a ribonucleoside 5'-triphosphate = RNA(n+1) + diphosphate. Functionally, DNA-dependent RNA polymerase catalyzes the transcription of DNA into RNA using the four ribonucleoside triphosphates as substrates. In Rickettsia rickettsii (strain Iowa), this protein is DNA-directed RNA polymerase subunit beta.